The primary structure comprises 114 residues: MKTIIVFLSLLVLATKFGDANEGVNQEQMKEVIQNEFREDFLNEMAPMSLLQQLEAIESTLLEKEADRNSRQKRCLGENVPCGDFPCCGKLACEKTFGYGWWYKSPFCVKPSKG.

The N-terminal stretch at 1–20 is a signal peptide; that stretch reads MKTIIVFLSLLVLATKFGDA. The propeptide occupies 21-74; it reads NEGVNQEQMKEVIQNEFREDFLNEMAPMSLLQQLEAIESTLLEKEADRNSRQKR. 3 disulfide bridges follow: cysteine 75–cysteine 88, cysteine 82–cysteine 93, and cysteine 87–cysteine 108.

The protein belongs to the neurotoxin 14 (magi-1) family. 03 (ICK-30-40) subfamily. Expressed by the venom gland.

The protein localises to the secreted. In terms of biological role, ion channel inhibitor. The chain is U17-barytoxin-Tl1d from Trittame loki (Brush-footed trapdoor spider).